Here is a 944-residue protein sequence, read N- to C-terminus: Nonsense-mediated mRNA decay factor SMG8 (944 aa).

2 disordered regions span residues 559–601 (LNNG…SNCC) and 629–654 (ASSE…TDNE). The span at 568 to 589 (QDEDAEEDEAEEEEGQEQEQPT) shows a compositional bias: acidic residues. Polar residues predominate over residues 629 to 640 (ASSEQLLNSEQN). Residues 641 to 650 (TTSSGTSSAD) are compositionally biased toward low complexity.

The protein belongs to the SMG8 family.

Involved in nonsense-mediated decay (NMD) of mRNAs containing premature stop codons. Probable component of kinase complex containing nonC and recruited to stalled ribosomes. The sequence is that of Nonsense-mediated mRNA decay factor SMG8 from Drosophila melanogaster (Fruit fly).